A 357-amino-acid chain; its full sequence is UDP-N-acetylglucosamine--N-acetylmuramyl-(pentapeptide) pyrophosphoryl-undecaprenol N-acetylglucosamine transferase (357 aa).

The UDP-N-acetyl-alpha-D-glucosamine site is built by R166, S196, and Q290.

It belongs to the glycosyltransferase 28 family. MurG subfamily.

Its subcellular location is the cell membrane. The catalysed reaction is Mur2Ac(oyl-L-Ala-gamma-D-Glu-L-Lys-D-Ala-D-Ala)-di-trans,octa-cis-undecaprenyl diphosphate + UDP-N-acetyl-alpha-D-glucosamine = beta-D-GlcNAc-(1-&gt;4)-Mur2Ac(oyl-L-Ala-gamma-D-Glu-L-Lys-D-Ala-D-Ala)-di-trans,octa-cis-undecaprenyl diphosphate + UDP + H(+). It participates in cell wall biogenesis; peptidoglycan biosynthesis. In terms of biological role, cell wall formation. Catalyzes the transfer of a GlcNAc subunit on undecaprenyl-pyrophosphoryl-MurNAc-pentapeptide (lipid intermediate I) to form undecaprenyl-pyrophosphoryl-MurNAc-(pentapeptide)GlcNAc (lipid intermediate II). The sequence is that of UDP-N-acetylglucosamine--N-acetylmuramyl-(pentapeptide) pyrophosphoryl-undecaprenol N-acetylglucosamine transferase from Staphylococcus epidermidis (strain ATCC 35984 / DSM 28319 / BCRC 17069 / CCUG 31568 / BM 3577 / RP62A).